A 473-amino-acid chain; its full sequence is Photosystem II CP43 reaction center protein (473 aa).

Residues 1–14 (MKTLYSPRRFYPVE) constitute a propeptide that is removed on maturation. N-acetylthreonine is present on T15. At T15 the chain carries Phosphothreonine. Helical transmembrane passes span 69-93 (LFEV…PHLA), 134-155 (LIGP…KDRN), 178-200 (KALF…RKIT), 255-275 (KPFA…LSYS), and 291-312 (WFNN…ASQA). E367 is a [CaMn4O5] cluster binding site. The helical transmembrane segment at 447-471 (RARAAAAGFEKGIDRDLEPVLFMTP) threads the bilayer.

This sequence belongs to the PsbB/PsbC family. PsbC subfamily. As to quaternary structure, PSII is composed of 1 copy each of membrane proteins PsbA, PsbB, PsbC, PsbD, PsbE, PsbF, PsbH, PsbI, PsbJ, PsbK, PsbL, PsbM, PsbT, PsbX, PsbY, PsbZ, Psb30/Ycf12, at least 3 peripheral proteins of the oxygen-evolving complex and a large number of cofactors. It forms dimeric complexes. It depends on Binds multiple chlorophylls and provides some of the ligands for the Ca-4Mn-5O cluster of the oxygen-evolving complex. It may also provide a ligand for a Cl- that is required for oxygen evolution. PSII binds additional chlorophylls, carotenoids and specific lipids. as a cofactor.

It is found in the plastid. The protein localises to the chloroplast thylakoid membrane. In terms of biological role, one of the components of the core complex of photosystem II (PSII). It binds chlorophyll and helps catalyze the primary light-induced photochemical processes of PSII. PSII is a light-driven water:plastoquinone oxidoreductase, using light energy to abstract electrons from H(2)O, generating O(2) and a proton gradient subsequently used for ATP formation. In Welwitschia mirabilis (Tree tumbo), this protein is Photosystem II CP43 reaction center protein.